The primary structure comprises 555 residues: Glypican-6 (555 aa).

A signal peptide spans 1-23; sequence MPSWIGAVILPLLGLLLSLPAGA. The span at 348-357 shows a compositional bias: low complexity; that stretch reads PALRSARSAP. 2 disordered regions span residues 348 to 376 and 480 to 501; these read PALRSARSAPENFNTRFRPYNPEERPTTA and GNDVNFQDTSDESSGSGSGSGC. Serine 529 carries GPI-anchor amidated serine lipidation. The propeptide at 530–555 is removed in mature form; the sequence is SAAQRGHSLLSWSLTCIVLALQRLCR.

Belongs to the glypican family. In terms of tissue distribution, widely expressed. High expression in fetal kidney and lung and lower expressions in fetal liver and brain. In adult tissues, very abundant in ovary, high levels also observed in liver, kidney, small intestine and colon. Not detected in peripheral blood leukocytes. Detected in breast cancer cells (at protein level).

The protein resides in the cell membrane. The protein localises to the secreted. Its subcellular location is the extracellular space. Cell surface proteoglycan that bears heparan sulfate. Putative cell surface coreceptor for growth factors, extracellular matrix proteins, proteases and anti-proteases. Enhances migration and invasion of cancer cells through WNT5A signaling. The protein is Glypican-6 (GPC6) of Homo sapiens (Human).